Consider the following 632-residue polypeptide: MLRRYTYNEIIKKSHKRCSNYGIKIDIPCPSKILRDEEFNVIIQKNKALIEIARPFMEILYNFLKGSGFSLYFTEKNGVVLTIIGDQDIIRDQIQMGIIEGADMSEKSAGTNGIGTAFAENISLQISGEEHFIKVFQIWTCSSSVVHDEDGNIIGCLNLTGRRQLAHPHTLGLVVAAVKSIENHLKVKKTQNELVKTYQYLNKITDSVNLGIFAVDTKGIIKAINKSACDMLHINEEDVINKNVDTVLDSWKHILQRLRNGQSYEDEEIMYSDKKKRFNINVYPIKDKNSNITGMVGIFKDIQNVYNLVNKYINRTAKYTFDDIIGQSEAMKRLKEQIKSISNSPSTVLIQGESGTGKELIAQSIHNNSNRRSKSFVAINCGAIPKSLIESELFGYEEGAFTGAKRGGCPGKFELANEGTLFLDEIGEMPLDMQVNLLRVLQEGCITRIGGNKCVDVDVRIIAATNKNLKKEIEDGNFREDLYYRLSVIPIYVPPLRERNGDIGILIEHFLKIKADKLGKLIPEIRKNIYENLLSYGWPGNVRELENCIENIVNMNGNTSFNFENRTIKKDVNCYSDVSLEYDMCSLEELEKRAISICINQCGGNISKACRILGINRSTLYIKIKKYNIKVR.

The PAS domain occupies 197–270 (TYQYLNKITD…GQSYEDEEIM (74 aa)). In terms of domain architecture, Sigma-54 factor interaction spans 324–554 (IIGQSEAMKR…LENCIENIVN (231 aa)). Residues 352–359 (GESGTGKE) and 416–425 (ANEGTLFLDE) each bind ATP. A DNA-binding region (H-T-H motif) is located at residues 606–625 (ISKACRILGINRSTLYIKIK).

This is Signal-transduction and transcriptional-control protein (stc) from Clostridium beijerinckii (Clostridium MP).